Here is a 105-residue protein sequence, read N- to C-terminus: Small ribosomal subunit protein uS10 (105 aa).

This sequence belongs to the universal ribosomal protein uS10 family. In terms of assembly, part of the 30S ribosomal subunit.

Involved in the binding of tRNA to the ribosomes. The protein is Small ribosomal subunit protein uS10 of Francisella philomiragia subsp. philomiragia (strain ATCC 25017 / CCUG 19701 / FSC 153 / O#319-036).